The primary structure comprises 152 residues: Ribosomal RNA large subunit methyltransferase H (152 aa).

S-adenosyl-L-methionine-binding positions include Leu71, Gly101, and 120-125 (LSKLTF).

The protein belongs to the RNA methyltransferase RlmH family. As to quaternary structure, homodimer.

It is found in the cytoplasm. The catalysed reaction is pseudouridine(1915) in 23S rRNA + S-adenosyl-L-methionine = N(3)-methylpseudouridine(1915) in 23S rRNA + S-adenosyl-L-homocysteine + H(+). Specifically methylates the pseudouridine at position 1915 (m3Psi1915) in 23S rRNA. In Thermosipho melanesiensis (strain DSM 12029 / CIP 104789 / BI429), this protein is Ribosomal RNA large subunit methyltransferase H.